We begin with the raw amino-acid sequence, 367 residues long: Palmitoyltransferase ZDHHC2 (367 aa).

The Cytoplasmic segment spans residues 1-16 (MAPSGPGSSARRRCRR). Residues 17-37 (VLYWIPVVFITLLLGWSYYAY) traverse the membrane as a helical segment. The Lumenal portion of the chain corresponds to 38–54 (AIQLCIVSMENTGEQVV). Residues 55–75 (CLMAYHLLFAMFVWSYWKTIF) traverse the membrane as a helical segment. Residues 76-170 (TLPMNPSKEF…NNCVGFSNYK (95 aa)) lie on the Cytoplasmic side of the membrane. Positions 127 to 177 (RYCDRCQLIKPDRCHHCSVCDKCILKMDHHCPWVNNCVGFSNYKFFLLFLA) constitute a DHHC domain. The S-palmitoyl cysteine intermediate role is filled by Cys-157. A helical transmembrane segment spans residues 171–191 (FFLLFLAYSLLYCLFIAATDL). Residues 192 to 208 (QYFIKFWTNGLPDTQAK) lie on the Lumenal side of the membrane. Residues 209–229 (FHIMFLFFAAAMFSVSLSSLF) traverse the membrane as a helical segment. Residues 230 to 367 (GYHCWLVSKN…NPALTMENET (138 aa)) are Cytoplasmic-facing. The tract at residues 299-367 (NQDPEQASTP…NPALTMENET (69 aa)) is mediates localization to plasma membrane and recycling endosomes. Positions 330–367 (ESQSHLLTDSQSWTESSINPGKCKAGMSNPALTMENET) are disordered. The span at 333-348 (SHLLTDSQSWTESSIN) shows a compositional bias: polar residues. Positions 335–336 (LL) match the Non-canonical dileucine endocytic signal motif. Ser-341 bears the Phosphoserine mark. An NPxY-like endocytic signal motif is present at residues 358-361 (NPAL).

This sequence belongs to the DHHC palmitoyltransferase family. In terms of assembly, monomer. Homodimer. The monomeric form has a higher catalytic activity. Post-translationally, autopalmitoylated. Ubiquitously expressed. Reduced expression in colorectal cancers with liver metastasis.

It localises to the postsynaptic density. Its subcellular location is the postsynaptic recycling endosome membrane. It is found in the cell membrane. The protein localises to the endoplasmic reticulum membrane. The protein resides in the golgi apparatus membrane. The enzyme catalyses L-cysteinyl-[protein] + hexadecanoyl-CoA = S-hexadecanoyl-L-cysteinyl-[protein] + CoA. It catalyses the reaction L-cysteinyl-[protein] + tetradecanoyl-CoA = S-tetradecanoyl-L-cysteinyl-[protein] + CoA. It carries out the reaction L-cysteinyl-[protein] + octadecanoyl-CoA = S-octadecanoyl-L-cysteinyl-[protein] + CoA. Its function is as follows. Palmitoyltransferase that catalyzes the addition of palmitate onto various protein substrates and is involved in a variety of cellular processes. Has no stringent fatty acid selectivity and in addition to palmitate can also transfer onto target proteins myristate from tetradecanoyl-CoA and stearate from octadecanoyl-CoA. In the nervous system, plays a role in long term synaptic potentiation by palmitoylating AKAP5 through which it regulates protein trafficking from the dendritic recycling endosomes to the plasma membrane and controls both structural and functional plasticity at excitatory synapses. In dendrites, mediates the palmitoylation of DLG4 when synaptic activity decreases and induces synaptic clustering of DLG4 and associated AMPA-type glutamate receptors. Also mediates the de novo and turnover palmitoylation of RGS7BP, a shuttle for Gi/o-specific GTPase-activating proteins/GAPs, promoting its localization to the plasma membrane in response to the activation of G protein-coupled receptors. Through the localization of these GTPase-activating proteins/GAPs, it also probably plays a role in G protein-coupled receptors signaling in neurons. Also probably plays a role in cell adhesion by palmitoylating CD9 and CD151 to regulate their expression and function. Palmitoylates the endoplasmic reticulum protein CKAP4 and regulates its localization to the plasma membrane. Could also palmitoylate LCK and regulate its localization to the plasma membrane. Functionally, (Microbial infection) Promotes Chikungunya virus (CHIKV) replication by mediating viral nsp1 palmitoylation. This is Palmitoyltransferase ZDHHC2 from Homo sapiens (Human).